Here is a 259-residue protein sequence, read N- to C-terminus: MTAILLVRRQPVTPIFFNQQYPTLVDICARWQLIYDANAPFELRFESDSLTLHKRDEPKLDGILVDFVTGAVAHRRKFGGGRGQSIAKAVGLKQGVTPSVVDGTAGLGRDAFVLASLGCTVTMVERHPVVAALLEDGLRRAYQDAEIGDWMHERMQLFHGSSLEALSKLEQEVDVVYLDPMYPHRDKSALVKKEMRVFQSLVGADLDADGLLAPALALATKRVVVKRPDYAEDLDGVKPSMVIDTKKNRFDVYVKAAMK.

S-adenosyl-L-methionine is bound by residues 109–110, 125–126, 161–162, and D179; these read RD, ER, and SS.

Belongs to the methyltransferase superfamily. RsmJ family.

It is found in the cytoplasm. It catalyses the reaction guanosine(1516) in 16S rRNA + S-adenosyl-L-methionine = N(2)-methylguanosine(1516) in 16S rRNA + S-adenosyl-L-homocysteine + H(+). In terms of biological role, specifically methylates the guanosine in position 1516 of 16S rRNA. The protein is Ribosomal RNA small subunit methyltransferase J of Shewanella putrefaciens (strain CN-32 / ATCC BAA-453).